A 526-amino-acid chain; its full sequence is ATP synthase subunit alpha (526 aa).

An ATP-binding site is contributed by 171–178; that stretch reads GDRQTGKT.

It belongs to the ATPase alpha/beta chains family. As to quaternary structure, F-type ATPases have 2 components, CF(1) - the catalytic core - and CF(0) - the membrane proton channel. CF(1) has five subunits: alpha(3), beta(3), gamma(1), delta(1), epsilon(1). CF(0) has three main subunits: a(1), b(2) and c(9-12). The alpha and beta chains form an alternating ring which encloses part of the gamma chain. CF(1) is attached to CF(0) by a central stalk formed by the gamma and epsilon chains, while a peripheral stalk is formed by the delta and b chains.

It is found in the cell inner membrane. The catalysed reaction is ATP + H2O + 4 H(+)(in) = ADP + phosphate + 5 H(+)(out). Functionally, produces ATP from ADP in the presence of a proton gradient across the membrane. The alpha chain is a regulatory subunit. In Cytophaga hutchinsonii (strain ATCC 33406 / DSM 1761 / CIP 103989 / NBRC 15051 / NCIMB 9469 / D465), this protein is ATP synthase subunit alpha.